The primary structure comprises 438 residues: UDP-N-acetylmuramoylalanine--D-glutamate ligase (438 aa).

112-118 (GSNGKST) lines the ATP pocket.

Belongs to the MurCDEF family.

It is found in the cytoplasm. It carries out the reaction UDP-N-acetyl-alpha-D-muramoyl-L-alanine + D-glutamate + ATP = UDP-N-acetyl-alpha-D-muramoyl-L-alanyl-D-glutamate + ADP + phosphate + H(+). It participates in cell wall biogenesis; peptidoglycan biosynthesis. Its function is as follows. Cell wall formation. Catalyzes the addition of glutamate to the nucleotide precursor UDP-N-acetylmuramoyl-L-alanine (UMA). The protein is UDP-N-acetylmuramoylalanine--D-glutamate ligase of Shigella dysenteriae serotype 1 (strain Sd197).